The following is a 431-amino-acid chain: Adenylosuccinate synthetase (431 aa).

GTP-binding positions include 12 to 18 (GDEGKGK) and 40 to 42 (GHT). Catalysis depends on aspartate 13, which acts as the Proton acceptor. Residues aspartate 13 and glycine 40 each contribute to the Mg(2+) site. IMP contacts are provided by residues 13 to 16 (DEGK), 38 to 41 (NAGH), threonine 129, arginine 143, glutamine 224, threonine 239, and arginine 303. Histidine 41 serves as the catalytic Proton donor. A substrate-binding site is contributed by 299–305 (VTTGRAR). GTP is bound by residues arginine 305, 331-333 (KLD), and 413-415 (GVG).

Belongs to the adenylosuccinate synthetase family. In terms of assembly, homodimer. Mg(2+) is required as a cofactor.

The protein localises to the cytoplasm. The enzyme catalyses IMP + L-aspartate + GTP = N(6)-(1,2-dicarboxyethyl)-AMP + GDP + phosphate + 2 H(+). Its pathway is purine metabolism; AMP biosynthesis via de novo pathway; AMP from IMP: step 1/2. Functionally, plays an important role in the de novo pathway of purine nucleotide biosynthesis. Catalyzes the first committed step in the biosynthesis of AMP from IMP. This is Adenylosuccinate synthetase from Mycobacteroides abscessus (strain ATCC 19977 / DSM 44196 / CCUG 20993 / CIP 104536 / JCM 13569 / NCTC 13031 / TMC 1543 / L948) (Mycobacterium abscessus).